The sequence spans 92 residues: Acylphosphatase (92 aa).

Positions 5-92 constitute an Acylphosphatase-like domain; that stretch reads RAHVFISGRV…GKEGIFTIVW (88 aa). Residues Arg20 and Asn38 contribute to the active site.

The protein belongs to the acylphosphatase family.

The enzyme catalyses an acyl phosphate + H2O = a carboxylate + phosphate + H(+). This is Acylphosphatase (acyP) from Chloroflexus aurantiacus (strain ATCC 29366 / DSM 635 / J-10-fl).